A 241-amino-acid chain; its full sequence is DNA repair protein RecO (241 aa).

This sequence belongs to the RecO family.

In terms of biological role, involved in DNA repair and RecF pathway recombination. In Phocaeicola vulgatus (strain ATCC 8482 / DSM 1447 / JCM 5826 / CCUG 4940 / NBRC 14291 / NCTC 11154) (Bacteroides vulgatus), this protein is DNA repair protein RecO.